The sequence spans 2201 residues: Tenascin (2201 aa).

Positions 1 to 22 (MGAMTQLLAGVFLAFLALATEG) are cleaved as a signal peptide. N-linked (GlcNAc...) asparagine glycosylation is present at Asn38. A phosphoserine mark is found at Ser65 and Ser70. A Phosphoserine; by FAM20C modification is found at Ser72. Residue Ser72 is glycosylated (O-linked (Xyl...) (chondroitin sulfate) serine). Positions 118–145 (DVKELLSRLEELENLVSSLREQCTAGAG) form a coiled coil. N-linked (GlcNAc...) asparagine glycans are attached at residues Asn166 and Asn184. One can recognise an EGF-like 1; incomplete domain in the interval 174 to 186 (CVCEPGWKGPNCS). 14 EGF-like domains span residues 186 to 217 (SEPE…EDCS), 217 to 248 (SQLA…ADCS), 248 to 280 (SREI…DDCN), 280 to 311 (NKPL…EDCS), 311 to 342 (SELI…EDCG), 342 to 373 (GKPT…VDCS), 373 to 404 (SEKR…ADCG), 404 to 435 (GELK…EDCS), 435 to 466 (SQLR…YDCS), 466 to 497 (SDMS…EDCR), 497 to 528 (RDRQ…PDCA), 528 to 559 (AELS…KDCK), 559 to 590 (KEQR…LDCG), and 590 to 621 (GQHS…EDCS). Intrachain disulfides connect Cys190–Cys200, Cys194–Cys205, Cys207–Cys216, Cys221–Cys231, Cys225–Cys236, Cys238–Cys247, Cys252–Cys263, Cys256–Cys268, Cys270–Cys279, Cys284–Cys294, Cys288–Cys299, Cys301–Cys310, Cys315–Cys325, Cys319–Cys330, Cys332–Cys341, Cys346–Cys356, Cys350–Cys361, Cys363–Cys372, Cys377–Cys387, Cys381–Cys392, Cys394–Cys403, Cys408–Cys418, Cys412–Cys423, Cys425–Cys434, Cys439–Cys449, Cys443–Cys454, Cys456–Cys465, Cys470–Cys480, Cys474–Cys485, Cys487–Cys496, Cys501–Cys511, Cys505–Cys516, Cys518–Cys527, Cys532–Cys542, Cys536–Cys547, Cys549–Cys558, Cys563–Cys573, Cys567–Cys578, Cys580–Cys589, Cys594–Cys604, Cys598–Cys609, and Cys611–Cys620. Asn327 carries an N-linked (GlcNAc...) asparagine glycan. Fibronectin type-III domains lie at 625–715 (PPKD…LPAP), 716–804 (EGLK…TRLD), 805–894 (APSQ…TGLD), 895–990 (APRN…TPKD), 991–1075 (LQVS…EQAP), 1076–1165 (ELEN…TGET), 1167–1256 (NLGE…TEEV), 1258–1350 (DMGN…LPQL), 1351–1439 (GDLA…AKEP), 1440–1531 (EIGN…ALPL), 1533–1621 (ENLT…EAEP), 1622–1711 (EVDN…TAMG), 1712–1801 (SPKE…ALDG), 1802–1888 (PSGL…TDLD), and 1889–1977 (SPRD…IGLL). Asn788 carries N-linked (GlcNAc...) asparagine glycosylation. Phosphothreonine is present on Thr905. Asn1018, Asn1034, Asn1079, Asn1093, Asn1119, Asn1184, Asn1210, Asn1261, Asn1275, Asn1301, Asn1366, Asn1392, Asn1445, Asn1455, Asn1485, and Asn1534 each carry an N-linked (GlcNAc...) asparagine glycan. An N-linked (GlcNAc...) asparagine glycan is attached at Asn1809. One can recognise a Fibrinogen C-terminal domain in the interval 1975 to 2190 (GLLYPFPKDC…FAEMKLRPSN (216 aa)). Asn2162 carries an N-linked (GlcNAc...) asparagine glycan.

It belongs to the tenascin family. Homohexamer; disulfide-linked. A homotrimer may be formed in the triple coiled-coil region and may be stabilized by disulfide rings at both ends. Two of such half-hexabrachions may be disulfide linked within the central globule. Interacts with CSPG4. Interacts (via the 3rd fibronectin type-III domain) with integrin ITGA9:ITGB1. In terms of tissue distribution, detected in fibroblasts (at protein level).

It is found in the secreted. The protein localises to the extracellular space. The protein resides in the extracellular matrix. Its function is as follows. Extracellular matrix protein implicated in guidance of migrating neurons as well as axons during development, synaptic plasticity as well as neuronal regeneration. Promotes neurite outgrowth from cortical neurons grown on a monolayer of astrocytes. Ligand for integrins alpha-8/beta-1, alpha-9/beta-1, alpha-V/beta-3 and alpha-V/beta-6. In tumors, stimulates angiogenesis by elongation, migration and sprouting of endothelial cells. This Homo sapiens (Human) protein is Tenascin (TNC).